A 476-amino-acid polypeptide reads, in one-letter code: Proline--tRNA ligase 2 (476 aa).

The protein belongs to the class-II aminoacyl-tRNA synthetase family. ProS type 3 subfamily. As to quaternary structure, homodimer.

Its subcellular location is the cytoplasm. It catalyses the reaction tRNA(Pro) + L-proline + ATP = L-prolyl-tRNA(Pro) + AMP + diphosphate. Its function is as follows. Catalyzes the attachment of proline to tRNA(Pro) in a two-step reaction: proline is first activated by ATP to form Pro-AMP and then transferred to the acceptor end of tRNA(Pro). The protein is Proline--tRNA ligase 2 of Bacillus cereus (strain ZK / E33L).